Reading from the N-terminus, the 221-residue chain is Endonuclease V (221 aa).

Mg(2+) is bound by residues Asp38 and Asp104.

It belongs to the endonuclease V family. The cofactor is Mg(2+).

The protein localises to the cytoplasm. It catalyses the reaction Endonucleolytic cleavage at apurinic or apyrimidinic sites to products with a 5'-phosphate.. Its function is as follows. DNA repair enzyme involved in the repair of deaminated bases. Selectively cleaves double-stranded DNA at the second phosphodiester bond 3' to a deoxyinosine leaving behind the intact lesion on the nicked DNA. Recognizes only deoxyinosine. The chain is Endonuclease V from Archaeoglobus fulgidus (strain ATCC 49558 / DSM 4304 / JCM 9628 / NBRC 100126 / VC-16).